The following is a 501-amino-acid chain: Microtubule-associated protein mmb1 (501 aa).

Composition is skewed to polar residues over residues 61-95 (NISSPSVPTSQSRVTQGQSLGNTQISNPTSKTNNV), 103-122 (RNPSQRLRPSTSLARLSNNA), and 132-168 (HENSISSKESPSVTTSKHVATITKPSTSSIARMSSNA). Disordered regions lie at residues 61 to 274 (NISS…VKVN), 328 to 381 (VSRN…TTGN), and 478 to 501 (NQTSEINDTNHSSHSSPLDLNRMI). Positions 234 to 252 (SSVVRPPTRTSTTRPLSRV) are enriched in low complexity. Composition is skewed to polar residues over residues 253–274 (NVTNASGSISKNSTSPSKVKVN), 367–381 (SRIQSTLSSRTTTGN), and 478–495 (NQTSEINDTNHSSHSSPL).

The protein resides in the cytoplasm. It localises to the cytoskeleton. Functionally, involved in the cell polarity process and in regulation of microtubule growth. Has a role in meiosis. Involved in microtubule dynamics. Binds to mitochondria and microtubules, attaching the tubular mitochondria to the microtubule lattice at multiple discrete interaction sites. The chain is Microtubule-associated protein mmb1 from Schizosaccharomyces pombe (strain 972 / ATCC 24843) (Fission yeast).